The primary structure comprises 61 residues: Chi-conotoxin MrIA (61 aa).

Residues 1-19 (MRCLPVLIILLLLTASAPG) form the signal peptide. Residues 20-48 (VVVLPKTEDDVPMSSVYGNGKSILRGILR) constitute a propeptide that is removed on maturation. 2 disulfide bridges follow: Cys-52-Cys-61 and Cys-53-Cys-58. 4-hydroxyproline is present on Pro-60.

This sequence belongs to the conotoxin T superfamily. In terms of tissue distribution, expressed by the venom duct.

It is found in the secreted. Its function is as follows. Chi-conotoxins inhibit the neuronal noradrenaline transporter (NET/SLC6A2). Activity has been described on both human (inhibition of norepinephrine uptake is IC(50)=1.26 uM) and rat (pIC(50)=6.21 corresponding IC(50)=0.16 uM) transporters. Acts as a reversible non-competitive inhibitor. The protein is Chi-conotoxin MrIA of Conus marmoreus (Marble cone).